A 95-amino-acid polypeptide reads, in one-letter code: UPF0235 protein Sama_2480 (95 aa).

This sequence belongs to the UPF0235 family.

In Shewanella amazonensis (strain ATCC BAA-1098 / SB2B), this protein is UPF0235 protein Sama_2480.